The following is a 204-amino-acid chain: LexA repressor (204 aa).

The H-T-H motif DNA-binding region spans 27–47; sequence VREIGEAVGLASSSTVHGHLA. Active-site for autocatalytic cleavage activity residues include Ser126 and Lys164.

Belongs to the peptidase S24 family. In terms of assembly, homodimer.

It catalyses the reaction Hydrolysis of Ala-|-Gly bond in repressor LexA.. In terms of biological role, represses a number of genes involved in the response to DNA damage (SOS response), including recA and lexA. In the presence of single-stranded DNA, RecA interacts with LexA causing an autocatalytic cleavage which disrupts the DNA-binding part of LexA, leading to derepression of the SOS regulon and eventually DNA repair. The chain is LexA repressor from Listeria innocua serovar 6a (strain ATCC BAA-680 / CLIP 11262).